The chain runs to 615 residues: ATP-dependent zinc metalloprotease FtsH 2 (615 aa).

Over Met1 to Asn7 the chain is Cytoplasmic. The chain crosses the membrane as a helical span at residues Phe8–Ser28. Over Arg29–Thr99 the chain is Periplasmic. The helical transmembrane segment at Phe100–Tyr120 threads the bilayer. At Phe121–Val615 the chain is on the cytoplasmic side. Gly195–Thr202 is a binding site for ATP. His418 contributes to the Zn(2+) binding site. Glu419 is an active-site residue. His422 and Asp495 together coordinate Zn(2+).

This sequence in the central section; belongs to the AAA ATPase family. It in the C-terminal section; belongs to the peptidase M41 family. As to quaternary structure, homohexamer. It depends on Zn(2+) as a cofactor.

The protein resides in the cell inner membrane. Its function is as follows. Acts as a processive, ATP-dependent zinc metallopeptidase for both cytoplasmic and membrane proteins. Plays a role in the quality control of integral membrane proteins. The polypeptide is ATP-dependent zinc metalloprotease FtsH 2 (Bdellovibrio bacteriovorus (strain ATCC 15356 / DSM 50701 / NCIMB 9529 / HD100)).